The chain runs to 235 residues: Keratin-associated protein 4-16 (235 aa).

Residues 1 to 132 (MCSSKMPCSP…CCCPCCCLRP (132 aa)) form a 16 X 5 AA repeats of C-C-[GIKRQVHEML]-[SPTRV]-[STVQRCP] region. Tandem repeats lie at residues 23-27 (CCHPS), 28-32 (CCQTT), 33-37 (CCRTT), 48-52 (CCRPQ), 53-57 (CCHSV), 58-62 (CCQPT), 63-67 (CCRPS), 68-72 (CCQTT), 78-82 (CCHPS), 83-87 (CCVSS), 88-92 (CCRPQ), 93-97 (CCHSV), 103-107 (CCHPS), 108-112 (CCISS), 118-122 (CCESS), and 128-132 (CCLRP). Over residues 203-224 (SPSPSLPSLSPPLPSPPLPSPH) the composition is skewed to pro residues. Residues 203-235 (SPSPSLPSLSPPLPSPPLPSPHFPSVNPKSMLQ) are disordered.

It belongs to the KRTAP type 4 family. Interacts with hair keratins.

In terms of biological role, in the hair cortex, hair keratin intermediate filaments are embedded in an interfilamentous matrix, consisting of hair keratin-associated proteins (KRTAP), which are essential for the formation of a rigid and resistant hair shaft through their extensive disulfide bond cross-linking with abundant cysteine residues of hair keratins. The matrix proteins include the high-sulfur and high-glycine-tyrosine keratins. The polypeptide is Keratin-associated protein 4-16 (Homo sapiens (Human)).